The sequence spans 455 residues: MYKHPWLPNLDLIDEMLKEIGVNSLDELFNDIPAEIKINRLLNVAKGKPLSEYEIEKEINEKVKKNVELQAPPFIGAGICPHYIPNVVKFIIGRSEFYTSYTPYQPEISQGLLQALFEYQSLMAELLDMDVVNASMYDWGSALAEAVLMANRINGKKTVLVPENANPFHKEVVRTWIGGKGIKIEEVKYDKNSGELDLEDLEKKSNIDDISAIYIQQPNFFGIFESNIEHVIDVAKHKRALSIVGVNLLSLGLIKPPGSYEADIVVGDGQELGLPLNFGGPLMGVFAVRWDMSLVRQMPGRIVGITKDTNGKMGFTLILQTREQFIKREKATSNITTNEALLAIANAVYLSLLGKEGMRELAEEIYFRSHYAAKKLTEIDNVSMPFRSDFFEEFAIRFPIEYDKISNKLKERKLQGGLKLSDYTSLFCVTEVHDKKSIDLLVSTIQEMINGVETS.

Belongs to the GcvP family. N-terminal subunit subfamily. The glycine cleavage system is composed of four proteins: P, T, L and H. In this organism, the P 'protein' is a heterodimer of two subunits.

It catalyses the reaction N(6)-[(R)-lipoyl]-L-lysyl-[glycine-cleavage complex H protein] + glycine + H(+) = N(6)-[(R)-S(8)-aminomethyldihydrolipoyl]-L-lysyl-[glycine-cleavage complex H protein] + CO2. The glycine cleavage system catalyzes the degradation of glycine. The P protein binds the alpha-amino group of glycine through its pyridoxal phosphate cofactor; CO(2) is released and the remaining methylamine moiety is then transferred to the lipoamide cofactor of the H protein. The protein is Probable glycine dehydrogenase (decarboxylating) subunit 1 of Saccharolobus islandicus (strain M.16.27) (Sulfolobus islandicus).